The chain runs to 321 residues: L-lactate dehydrogenase (321 aa).

Residues valine 19, aspartate 40, lysine 45, tyrosine 71, and glycine 85 to alanine 86 contribute to the NAD(+) site. Substrate-binding positions include glutamine 88, arginine 94, and asparagine 126–aspartate 129. NAD(+)-binding positions include alanine 124–asparagine 126 and serine 149. Aspartate 154 to arginine 157 is a substrate binding site. The beta-D-fructose 1,6-bisphosphate site is built by arginine 159 and histidine 174. Residue histidine 181 is the Proton acceptor of the active site. Tyrosine 226 is modified (phosphotyrosine). Threonine 235 provides a ligand contact to substrate.

This sequence belongs to the LDH/MDH superfamily. LDH family. In terms of assembly, homotetramer.

Its subcellular location is the cytoplasm. It carries out the reaction (S)-lactate + NAD(+) = pyruvate + NADH + H(+). Its pathway is fermentation; pyruvate fermentation to lactate; (S)-lactate from pyruvate: step 1/1. Its activity is regulated as follows. Allosterically activated by fructose 1,6-bisphosphate (FBP). Catalyzes the conversion of lactate to pyruvate. The polypeptide is L-lactate dehydrogenase (Oceanobacillus iheyensis (strain DSM 14371 / CIP 107618 / JCM 11309 / KCTC 3954 / HTE831)).